A 306-amino-acid chain; its full sequence is Nucleotide-binding protein amb4396 (306 aa).

Residues 1–14 show a composition bias toward polar residues; it reads MSDLHSSPTDQTSA. Positions 1–20 are disordered; it reads MSDLHSSPTDQTSAPAHAGG. 29–36 lines the ATP pocket; it reads GMSGAGKT. 77-80 serves as a coordination point for GTP; sequence DIRT.

The protein belongs to the RapZ-like family.

Functionally, displays ATPase and GTPase activities. In Paramagnetospirillum magneticum (strain ATCC 700264 / AMB-1) (Magnetospirillum magneticum), this protein is Nucleotide-binding protein amb4396.